The following is a 943-amino-acid chain: MSQDYKTTLHLPATDFPMRGDLPKREPAILERWERDDFYAQLRAHAKGRPLFLLHDGPPYANGQIHLGHAVNKILKDIIIKSKHLDGFDAPYIPGWDCHGLPIEIAIEKKYGKVGVTLDAVQFRQKCREYAAEQIQLQRRDFKRLGIIGDWDAPYKTLDFRFEADEIRALAKIVDKGHLIRGTKPVHWCFDCGSALAEAEIEYTDKTSPMVDVAYPALDPSALAAVFNATLPPDVQLAVPIWTTTPWTLPASLAISVGPTLDYVLVEGPTHSGQRRWLILAEALAAKALARYGIAELLIHGSAKGAAMEQHILAHPFYPDRTIPLLLGNHVSAEDGTGAVHTAPGHGQEDHQVFQQYGLLNHYSAAELNPVDARGVYLPTTPPFSELTLAGLHIWKANPLIVDALRLRGVLLAAAEMHHSYPHCWRHKTPIVFRATPQWFISMEQAALRSAALKAITHVTWYPQWGQARILSMIENRPDWTISRQRTWGVPIPLFVHRHSGAPHPRSAALMRQVADRVEQQGVDIWYSLDQTELLGTEADQYEKITDILDVWFDSGITHEAVLLERGLPKPADLYLEGADQHRGWFQSSLLTGVAMDNAAPYKQCLTHGFTVDQHGRKMSKSLGNGIEPQDIIKTLGADILRLWIASTDYSNEMSLSQEILKRTTDAYRRIRNTARFLLGNLHGFDPTLHLVPLSDMIALDRWIVHRAFELQQTIKAAYTRYDFAEIVQTILNFCSVDLGSLYLDVTKDRLYTMREDAPGRRSAQTAMYHLTAAFVRWIAPILSFTADELWSYLPGDHADNVLFTTWYDGLAPLPPNAPLTAADFDKLLTLRDHVTKVLEPMRANGVIGAALEAEITIAADADTAARWQPLTEELRFLFISGDVTVTPANTDGFFVSAQPTTKAKCARCWHYRADIGAHPTHPELCGRCVTNVDGPGEQRHWF.

The 'HIGH' region motif lies at 59–69 (PYANGQIHLGH). Glu577 is an L-isoleucyl-5'-AMP binding site. The 'KMSKS' region signature appears at 618–622 (KMSKS). Lys621 lines the ATP pocket. Residues Cys906, Cys909, Cys926, and Cys929 each coordinate Zn(2+).

The protein belongs to the class-I aminoacyl-tRNA synthetase family. IleS type 1 subfamily. As to quaternary structure, monomer. It depends on Zn(2+) as a cofactor.

Its subcellular location is the cytoplasm. The catalysed reaction is tRNA(Ile) + L-isoleucine + ATP = L-isoleucyl-tRNA(Ile) + AMP + diphosphate. In terms of biological role, catalyzes the attachment of isoleucine to tRNA(Ile). As IleRS can inadvertently accommodate and process structurally similar amino acids such as valine, to avoid such errors it has two additional distinct tRNA(Ile)-dependent editing activities. One activity is designated as 'pretransfer' editing and involves the hydrolysis of activated Val-AMP. The other activity is designated 'posttransfer' editing and involves deacylation of mischarged Val-tRNA(Ile). This is Isoleucine--tRNA ligase from Xylella fastidiosa (strain 9a5c).